Consider the following 156-residue polypeptide: Cyclin-dependent kinase inhibitor 2A (156 aa).

Position 1 is an N-acetylmethionine (Met-1). Phosphoserine occurs at positions 7 and 8. ANK repeat units follow at residues 11-40 (PSAD…LPNA), 44-72 (YGRR…EPNC), 77-106 (TLTR…RLDV), and 110-139 (WGRL…GTRG). A phosphoserine mark is found at Ser-140 and Ser-152.

The protein belongs to the CDKN2 cyclin-dependent kinase inhibitor family. As to quaternary structure, heterodimer with CDK4 or CDK6. Predominant p16 complexes contained CDK6. Interacts with CDK4 (both 'T-172'-phosphorylated and non-phosphorylated forms); the interaction inhibits cyclin D-CDK4 kinase activity. Interacts with ISCO2. Phosphorylation seems to increase interaction with CDK4. As to expression, widely expressed but not detected in brain or skeletal muscle. Isoform 3 is pancreas-specific.

The protein localises to the cytoplasm. Its subcellular location is the nucleus. In terms of biological role, acts as a negative regulator of the proliferation of normal cells by interacting strongly with CDK4 and CDK6. This inhibits their ability to interact with cyclins D and to phosphorylate the retinoblastoma protein. This chain is Cyclin-dependent kinase inhibitor 2A, found in Homo sapiens (Human).